A 479-amino-acid chain; its full sequence is Putative L-cysteine desulfhydrase 2 (479 aa).

The interval 1-36 is disordered; sequence MASLQSGGDAAANGVDADVDGAASPPSAKRPRAGAG. Positions 7-36 are enriched in low complexity; sequence GGDAAANGVDADVDGAASPPSAKRPRAGAG. Lys-270 is modified (N6-(pyridoxal phosphate)lysine).

The protein belongs to the class-V pyridoxal-phosphate-dependent aminotransferase family. It depends on pyridoxal 5'-phosphate as a cofactor.

It catalyses the reaction L-cysteine + H2O = hydrogen sulfide + pyruvate + NH4(+) + H(+). Functionally, catalyzes the production of hydrogen sulfide (H2S) from cysteine. This Oryza sativa subsp. japonica (Rice) protein is Putative L-cysteine desulfhydrase 2.